Consider the following 779-residue polypeptide: Ribonucleoside-diphosphate reductase large subunit (779 aa).

Substrate is bound by residues Ser178, 193-194 (SC), Gly222, 420-424 (NLCIE), and 614-618 (PTATS). Cys194 and Cys440 form a disulfide bridge. The active-site Proton acceptor is Asn420. The Cysteine radical intermediate role is filled by Cys422. The active-site Proton acceptor is the Glu424.

Belongs to the ribonucleoside diphosphate reductase large chain family. Heterotetramer composed of a homodimer of the large subunit (R1) and a homodimer of the small subunit (R2). Larger multisubunit protein complex are also active, composed of (R1)n(R2)n.

The enzyme catalyses a 2'-deoxyribonucleoside 5'-diphosphate + [thioredoxin]-disulfide + H2O = a ribonucleoside 5'-diphosphate + [thioredoxin]-dithiol. Under complex allosteric control mediated by deoxynucleoside triphosphates and ATP binding. The type of nucleotide bound at the specificity site determines substrate preference. It seems probable that ATP makes the enzyme reduce CDP and UDP, dGTP favors ADP reduction and dTTP favors GDP reduction. Functionally, ribonucleoside-diphosphate reductase holoenzyme provides the precursors necessary for viral DNA synthesis. Allows virus growth in non-dividing cells. Catalyzes the biosynthesis of deoxyribonucleotides from the corresponding ribonucleotides. The chain is Ribonucleoside-diphosphate reductase large subunit from African swine fever virus (isolate Tick/Malawi/Lil 20-1/1983) (ASFV).